We begin with the raw amino-acid sequence, 241 residues long: Purine nucleoside phosphorylase DeoD-type (241 aa).

His-5 is an a purine D-ribonucleoside binding site. Residues Gly-21, Arg-25, Arg-44, and 88–91 each bind phosphate; that span reads RVGS. Residues 180-182 and 204-205 contribute to the a purine D-ribonucleoside site; these read EME and SD. Residue Asp-205 is the Proton donor of the active site.

The protein belongs to the PNP/UDP phosphorylase family. Homohexamer; trimer of homodimers.

The catalysed reaction is a purine D-ribonucleoside + phosphate = a purine nucleobase + alpha-D-ribose 1-phosphate. It catalyses the reaction a purine 2'-deoxy-D-ribonucleoside + phosphate = a purine nucleobase + 2-deoxy-alpha-D-ribose 1-phosphate. Its function is as follows. Catalyzes the reversible phosphorolytic breakdown of the N-glycosidic bond in the beta-(deoxy)ribonucleoside molecules, with the formation of the corresponding free purine bases and pentose-1-phosphate. This is Purine nucleoside phosphorylase DeoD-type from Yersinia enterocolitica serotype O:8 / biotype 1B (strain NCTC 13174 / 8081).